A 373-amino-acid chain; its full sequence is SWI/SNF-related matrix-associated actin-dependent regulator of chromatin subfamily B member 1-A (373 aa).

The interval Met-1 to Ser-101 is DNA-binding.

Belongs to the SNF5 family. In terms of assembly, component of the multiprotein chromatin-remodeling complexes SWI/SNF. Component of neural progenitors-specific chromatin remodeling complex (npBAF complex) and the neuron-specific chromatin remodeling complex (nBAF complex). Component of the BAF (SWI/SNF) chromatin remodeling complex. Component of the SWI/SNF-B (PBAF) chromatin remodeling complex. Binds to double-stranded DNA.

The protein resides in the nucleus. In terms of biological role, involved in chromatin-remodeling. Core component of the BAF (SWI/SNF) complex. This ATP-dependent chromatin-remodeling complex plays important roles in cell proliferation and differentiation, in cellular antiviral activities and inhibition of tumor formation. Belongs to the neural progenitors-specific chromatin remodeling complex (npBAF complex) and the neuron-specific chromatin remodeling complex (nBAF complex) and may play a role in neural development. The protein is SWI/SNF-related matrix-associated actin-dependent regulator of chromatin subfamily B member 1-A (smarcb1a) of Danio rerio (Zebrafish).